Reading from the N-terminus, the 271-residue chain is Formamidopyrimidine-DNA glycosylase (271 aa).

P2 acts as the Schiff-base intermediate with DNA in catalysis. Residue E3 is the Proton donor of the active site. Residue K57 is the Proton donor; for beta-elimination activity of the active site. Positions 90, 109, and 151 each coordinate DNA. The segment at 236 to 270 (HVYGRGGETCTECGHLLSEIRLGQRTTVFCSLCQT) adopts an FPG-type zinc-finger fold. The Proton donor; for delta-elimination activity role is filled by R260.

It belongs to the FPG family. In terms of assembly, monomer. Zn(2+) serves as cofactor.

The catalysed reaction is Hydrolysis of DNA containing ring-opened 7-methylguanine residues, releasing 2,6-diamino-4-hydroxy-5-(N-methyl)formamidopyrimidine.. It catalyses the reaction 2'-deoxyribonucleotide-(2'-deoxyribose 5'-phosphate)-2'-deoxyribonucleotide-DNA = a 3'-end 2'-deoxyribonucleotide-(2,3-dehydro-2,3-deoxyribose 5'-phosphate)-DNA + a 5'-end 5'-phospho-2'-deoxyribonucleoside-DNA + H(+). Involved in base excision repair of DNA damaged by oxidation or by mutagenic agents. Acts as a DNA glycosylase that recognizes and removes damaged bases. Has a preference for oxidized purines, such as 7,8-dihydro-8-oxoguanine (8-oxoG). Has AP (apurinic/apyrimidinic) lyase activity and introduces nicks in the DNA strand. Cleaves the DNA backbone by beta-delta elimination to generate a single-strand break at the site of the removed base with both 3'- and 5'-phosphates. This is Formamidopyrimidine-DNA glycosylase from Shewanella amazonensis (strain ATCC BAA-1098 / SB2B).